The following is a 412-amino-acid chain: Lipoyl synthase, mitochondrial (412 aa).

Cys-127, Cys-132, Cys-138, Cys-159, Cys-163, Cys-166, and Ser-375 together coordinate [4Fe-4S] cluster. The 223-residue stretch at 142 to 364 (SDDEGTATAT…EKEAMDMGFL (223 aa)) folds into the Radical SAM core domain.

Belongs to the radical SAM superfamily. Lipoyl synthase family. [4Fe-4S] cluster serves as cofactor.

Its subcellular location is the mitochondrion. The enzyme catalyses [[Fe-S] cluster scaffold protein carrying a second [4Fe-4S](2+) cluster] + N(6)-octanoyl-L-lysyl-[protein] + 2 oxidized [2Fe-2S]-[ferredoxin] + 2 S-adenosyl-L-methionine + 4 H(+) = [[Fe-S] cluster scaffold protein] + N(6)-[(R)-dihydrolipoyl]-L-lysyl-[protein] + 4 Fe(3+) + 2 hydrogen sulfide + 2 5'-deoxyadenosine + 2 L-methionine + 2 reduced [2Fe-2S]-[ferredoxin]. It participates in protein modification; protein lipoylation via endogenous pathway; protein N(6)-(lipoyl)lysine from octanoyl-[acyl-carrier-protein]: step 2/2. Functionally, catalyzes the radical-mediated insertion of two sulfur atoms into the C-6 and C-8 positions of the octanoyl moiety bound to the lipoyl domains of lipoate-dependent enzymes, thereby converting the octanoylated domains into lipoylated derivatives. This Leishmania infantum protein is Lipoyl synthase, mitochondrial.